We begin with the raw amino-acid sequence, 191 residues long: MGALCTLWLGLVLLGVLGALQTSAQAQVSLQPNFQQDKFLGRWFTSGLASNSSWFREKKNVLSMCMSVVAPTADGGLNLTSTFLRKDQCETRTLLLRPAGTPGCYSYTSPHWGSTHDVWVVATNYEEYALLYTAGSKGLGQDFHMATLYSRTQTPKAEIKEKFSTFAKTQGFTEDAIVFLPQTDKCMEENK.

The N-terminal stretch at 1–24 is a signal peptide; it reads MGALCTLWLGLVLLGVLGALQTSA. Gln-25 is subject to Pyrrolidone carboxylic acid. Residue Asn-51 is glycosylated (N-linked (GlcNAc...) asparagine). The active-site Nucleophile is Cys-65. N-linked (GlcNAc...) asparagine glycosylation is present at Asn-78. Cys-89 and Cys-186 form a disulfide bridge.

It belongs to the calycin superfamily. Lipocalin family. In terms of assembly, monomer. N- and O-glycosylated. Both N-glycosylation recognition sites are almost quantitatively occupied by N-glycans of the biantennary complex type, with a considerable proportion of structures bearing a bisecting GlcNAc. N-glycan at Asn-78: dHex1Hex5HexNAc4. Agalacto structure as well as sialylated and nonsialylated oligosaccharides bearing alpha2-3- and/or alpha2-6-linked NeuNAc are present.

The protein resides in the rough endoplasmic reticulum. It localises to the nucleus membrane. The protein localises to the golgi apparatus. It is found in the cytoplasm. Its subcellular location is the perinuclear region. The protein resides in the secreted. It catalyses the reaction prostaglandin H2 = prostaglandin D2. Its function is as follows. Catalyzes the conversion of PGH2 to PGD2, a prostaglandin involved in smooth muscle contraction/relaxation and a potent inhibitor of platelet aggregation. Involved in a variety of CNS functions, such as sedation, NREM sleep and PGE2-induced allodynia, and may have an anti-apoptotic role in oligodendrocytes. Binds small non-substrate lipophilic molecules, including biliverdin, bilirubin, retinal, retinoic acid and thyroid hormone, and may act as a scavenger for harmful hydrophobic molecules and as a secretory retinoid and thyroid hormone transporter. Possibly involved in development and maintenance of the blood-brain, blood-retina, blood-aqueous humor and blood-testis barrier. It is likely to play important roles in both maturation and maintenance of the central nervous system and male reproductive system. Involved in PLA2G3-dependent maturation of mast cells. PLA2G3 is secreted by immature mast cells and acts on nearby fibroblasts upstream to PTDGS to synthesize PGD2, which in turn promotes mast cell maturation and degranulation via PTGDR. The protein is Prostaglandin-H2 D-isomerase (PTGDS) of Canis lupus familiaris (Dog).